Here is a 141-residue protein sequence, read N- to C-terminus: uncharacterized protein (141 aa).

Residues 114-134 (ILFTCYIQSFSLLISNFFIAI) form a helical membrane-spanning segment.

It is found in the membrane. This is an uncharacterized protein from Schizosaccharomyces pombe (strain 972 / ATCC 24843) (Fission yeast).